The sequence spans 263 residues: MTMTATSIDVRVQSPKIDVRDLNFYYGKFHALKNISLQIPEKQVTAFIGPSGCGKSTLLRTFNKMYALYPEQRAEGEINMDGENLLTSRMDIALLRAKVGMVFQKPTPFPMSIYDNIAFGVKLFERLSRSEMDDRVEWALTKAALWGEVKDKLHQSGYGLSGGQQQRLCIARGIAIRPEVLLLDEPCSALDPISTGKIEELIAELKDDYTVVIVTHNMQQAARCSDYTAYMYLGELIEFGETEKIFIKPRRKETEDYITGRFG.

The ABC transporter domain maps to 17-258; the sequence is IDVRDLNFYY…PRRKETEDYI (242 aa). 49–56 provides a ligand contact to ATP; sequence GPSGCGKS.

The protein belongs to the ABC transporter superfamily. Phosphate importer (TC 3.A.1.7) family. As to quaternary structure, the complex is composed of two ATP-binding proteins (PstB), two transmembrane proteins (PstC and PstA) and a solute-binding protein (PstS).

The protein localises to the cell inner membrane. The catalysed reaction is phosphate(out) + ATP + H2O = ADP + 2 phosphate(in) + H(+). Its function is as follows. Part of the ABC transporter complex PstSACB involved in phosphate import. Responsible for energy coupling to the transport system. The chain is Phosphate import ATP-binding protein PstB from Ralstonia nicotianae (strain ATCC BAA-1114 / GMI1000) (Ralstonia solanacearum).